A 68-amino-acid polypeptide reads, in one-letter code: Large ribosomal subunit protein bL32 (68 aa).

The protein belongs to the bacterial ribosomal protein bL32 family.

This chain is Large ribosomal subunit protein bL32, found in Ruegeria pomeroyi (strain ATCC 700808 / DSM 15171 / DSS-3) (Silicibacter pomeroyi).